A 332-amino-acid chain; its full sequence is Ribosomal RNA small subunit methyltransferase H (332 aa).

S-adenosyl-L-methionine is bound by residues G39–Y41, D56, F83, D100, and Q107.

It belongs to the methyltransferase superfamily. RsmH family.

It localises to the cytoplasm. It catalyses the reaction cytidine(1402) in 16S rRNA + S-adenosyl-L-methionine = N(4)-methylcytidine(1402) in 16S rRNA + S-adenosyl-L-homocysteine + H(+). In terms of biological role, specifically methylates the N4 position of cytidine in position 1402 (C1402) of 16S rRNA. The protein is Ribosomal RNA small subunit methyltransferase H of Bartonella grahamii (strain as4aup).